An 89-amino-acid polypeptide reads, in one-letter code: Dynein light chain LC6, flagellar outer arm (89 aa).

Belongs to the dynein light chain family. Consists of at least 3 heavy chains (alpha, beta and gamma), 2 intermediate chains and 8 light chains.

The protein resides in the cytoplasm. Its subcellular location is the cytoskeleton. The protein localises to the flagellum axoneme. The polypeptide is Dynein light chain LC6, flagellar outer arm (Heliocidaris crassispina (Sea urchin)).